The following is a 334-amino-acid chain: Cathepsin K (334 aa).

A signal peptide spans 1–19 (MLRLHWLALLVLLLPMAAA). Positions 20-119 (QLRPEPELDA…TLYVPDWSSR (100 aa)) are cleaved as a propeptide — activation peptide. An N-linked (GlcNAc...) asparagine glycan is attached at asparagine 108. 3 disulfide bridges follow: cysteine 141/cysteine 182, cysteine 175/cysteine 215, and cysteine 274/cysteine 323. Residue cysteine 144 is part of the active site. Catalysis depends on residues histidine 281 and asparagine 301.

This sequence belongs to the peptidase C1 family.

The catalysed reaction is Broad proteolytic activity. With small-molecule substrates and inhibitors, the major determinant of specificity is P2, which is preferably Leu, Met &gt; Phe, and not Arg.. Closely involved in osteoclastic bone resorption and may participate partially in the disorder of bone remodeling. Displays potent endoprotease activity against fibrinogen at acid pH. May play an important role in extracellular matrix degradation. This Gallus gallus (Chicken) protein is Cathepsin K (CTSK).